Consider the following 214-residue polypeptide: Cytochrome b (214 aa).

Helical transmembrane passes span 31–51, 75–96, 111–131, and 176–196; these read FGSM…FLAI, WTMQ…YIHI, WLSG…GYVL, and FFAL…AHIM. Positions 81 and 95 each coordinate heme b. Residues histidine 180 and histidine 194 each coordinate heme b. Residue histidine 199 participates in a ubiquinone binding.

It belongs to the cytochrome b family. In terms of assembly, the cytochrome bc1 complex contains 3 respiratory subunits (MT-CYB, CYC1 and UQCRFS1), 2 core proteins (UQCRC1 and UQCRC2) and probably 6 low-molecular weight proteins. Heme b is required as a cofactor.

The protein localises to the mitochondrion inner membrane. Component of the ubiquinol-cytochrome c reductase complex (complex III or cytochrome b-c1 complex) that is part of the mitochondrial respiratory chain. The b-c1 complex mediates electron transfer from ubiquinol to cytochrome c. Contributes to the generation of a proton gradient across the mitochondrial membrane that is then used for ATP synthesis. The sequence is that of Cytochrome b (MT-CYB) from Elapsoidea semiannulata (Angolan garter snake).